A 239-amino-acid polypeptide reads, in one-letter code: Fatty acid metabolism regulator protein (239 aa).

An HTH gntR-type domain is found at 6–74 (QSPAGFAEEY…HGKPTKVNNF (69 aa)). A DNA-binding region (H-T-H motif) is located at residues 34–53 (ERELSELIGVTRTTLREVLQ).

In terms of assembly, homodimer.

The protein resides in the cytoplasm. Functionally, multifunctional regulator of fatty acid metabolism. Represses transcription of at least eight genes required for fatty acid transport and beta-oxidation including fadA, fadB, fadD, fadL and fadE. Activates transcription of at least three genes required for unsaturated fatty acid biosynthesis: fabA, fabB and iclR, the gene encoding the transcriptional regulator of the aceBAK operon encoding the glyoxylate shunt enzymes. Binding of FadR is specifically inhibited by long chain fatty acyl-CoA compounds. This chain is Fatty acid metabolism regulator protein, found in Salmonella typhimurium (strain LT2 / SGSC1412 / ATCC 700720).